A 387-amino-acid polypeptide reads, in one-letter code: Protoheme IX farnesyltransferase, mitochondrial (387 aa).

8 helical membrane-spanning segments follow: residues 95–115 (LTVL…YPGL), 117–137 (FNTL…ANAF), 183–203 (FLVN…YMGI), 212–232 (IVNT…GWAA), 242–262 (PGGL…FNAF), 284–306 (ALNA…AYIS), 311–330 (GPWY…ARAW), and 345–365 (FFAS…CHMI).

The protein belongs to the UbiA prenyltransferase family.

It localises to the mitochondrion membrane. It carries out the reaction heme b + (2E,6E)-farnesyl diphosphate + H2O = Fe(II)-heme o + diphosphate. Its function is as follows. Converts protoheme IX and farnesyl diphosphate to heme O. The chain is Protoheme IX farnesyltransferase, mitochondrial (cox10) from Schizosaccharomyces pombe (strain 972 / ATCC 24843) (Fission yeast).